The following is a 336-amino-acid chain: MLYRIARAGIFKLDAEKAHDLAIQNFKRFNGTPLDIFYRQNLASKPVEVMGIKFKNPVGLAAGLDKNGECIEAFGAMGFGFVEVGTVTPRPQSGNDKPRLFRLIEAEGIINRMGFNNLGVDNLVENVKKAKYDGVIGINIGKNKDTPIEKGTEDYLICMEKVYQYAGYIAVNISSPNTPGLRTLQYGEALDDLLSQLKEKQKELAEKYGKYVPVALKIAPDLEDDELTQIAESLIKYKIDGVIATNTTLDRSMVEGMKHAEEMGGLSGRPVQTRSTEVVRRLKELLGDNLPIIGVGGIDSYVAAKEKMVAGAELVQVYSGFIYKGPGLVRDIVNNI.

FMN-binding positions include 62–66 (AGLDK) and Thr-86. Lys-66 serves as a coordination point for substrate. Position 111–115 (111–115 (NRMGF)) interacts with substrate. FMN contacts are provided by Asn-139 and Asn-172. Asn-172 is a substrate binding site. Catalysis depends on Ser-175, which acts as the Nucleophile. Residue Asn-177 coordinates substrate. The FMN site is built by Lys-217 and Thr-245. Residue 246 to 247 (NT) participates in substrate binding. FMN-binding positions include Gly-268, Gly-297, and 318–319 (YS).

The protein belongs to the dihydroorotate dehydrogenase family. Type 2 subfamily. In terms of assembly, monomer. FMN is required as a cofactor.

It localises to the cell membrane. It carries out the reaction (S)-dihydroorotate + a quinone = orotate + a quinol. Its pathway is pyrimidine metabolism; UMP biosynthesis via de novo pathway; orotate from (S)-dihydroorotate (quinone route): step 1/1. Catalyzes the conversion of dihydroorotate to orotate with quinone as electron acceptor. The sequence is that of Dihydroorotate dehydrogenase (quinone) from Aliivibrio fischeri (strain ATCC 700601 / ES114) (Vibrio fischeri).